Consider the following 123-residue polypeptide: MPTIQQLIRKPRQPKVKRSKSQHLESCPQKRGVCTRVYTTTPKKPNSAMRKVAKVRLTNGFEVISYIPGESHNLQEHSVVLIRGGRVKDLPGVRYHILRGVLDTQGVKDRKQRRSKYGAKRPK.

The disordered stretch occupies residues 1-28; the sequence is MPTIQQLIRKPRQPKVKRSKSQHLESCP. A compositionally biased stretch (basic residues) spans 9 to 21; that stretch reads RKPRQPKVKRSKS. Position 89 is a 3-methylthioaspartic acid (aspartate 89).

It belongs to the universal ribosomal protein uS12 family. In terms of assembly, part of the 30S ribosomal subunit. Contacts proteins S8 and S17. May interact with IF1 in the 30S initiation complex.

With S4 and S5 plays an important role in translational accuracy. Functionally, interacts with and stabilizes bases of the 16S rRNA that are involved in tRNA selection in the A site and with the mRNA backbone. Located at the interface of the 30S and 50S subunits, it traverses the body of the 30S subunit contacting proteins on the other side and probably holding the rRNA structure together. The combined cluster of proteins S8, S12 and S17 appears to hold together the shoulder and platform of the 30S subunit. The chain is Small ribosomal subunit protein uS12 from Dinoroseobacter shibae (strain DSM 16493 / NCIMB 14021 / DFL 12).